Here is a 67-residue protein sequence, read N- to C-terminus: LPS-assembly lipoprotein LptM (67 aa).

The signal sequence occupies residues 1–19 (MKNVFKALTVLLTLFSLTG). The N-palmitoyl cysteine moiety is linked to residue Cys-20. The S-diacylglycerol cysteine moiety is linked to residue Cys-20. The disordered stretch occupies residues 26-67 (LYFPPADKNAPPPTKPVETQTQSTVPDKNDRATGDGPSQVNY). Residues 42 to 51 (VETQTQSTVP) show a composition bias toward polar residues.

Belongs to the LptM family. As to quaternary structure, interacts with the outer membrane embedded portion of the LPS translocon formed by LptD and LptE (LptDE).

Its subcellular location is the cell outer membrane. Its function is as follows. Component of the lipopolysaccharide (LPS) transport (Lpt) pathway that promotes efficient assembly of the outer membrane LPS translocon (LptDE) by the BAM complex. Facilitates oxidative maturation of LptD by stabilizing a conformation of the LPS translocon in which LptD can efficiently acquire native disulfide bonds, thereby activating the LPS translocon. This is LPS-assembly lipoprotein LptM from Escherichia coli O157:H7.